Reading from the N-terminus, the 237-residue chain is Lectin ConGF (237 aa).

The Mn(2+) site is built by glutamate 8 and aspartate 10. Residues aspartate 10, tyrosine 12, asparagine 14, and aspartate 19 each contribute to the Ca(2+) site. Asparagine 14 lines the a carbohydrate pocket. Mn(2+) contacts are provided by aspartate 19 and histidine 24. A carbohydrate-binding residues include leucine 99, tyrosine 100, aspartate 208, and arginine 228.

The protein belongs to the leguminous lectin family. Homotetramer; dimer of dimers. Post-translationally, concanavalin A-like lectins of the Diocleinae subtribe undergo proteolytic processing referred to as circular permutation. The propeptide is split into an N-terminal and a C-terminal part, the gamma and beta chain, respectively. These are then religated in beta-gamma order to form the mature alpha chain. The beta and gamma chains can often be detected in cell extracts. Residues 1-118 of the mature chain, as displayed here, probably constitute the beta chain in the propeptide, residues 119-237 the gamma chain.

In terms of biological role, lectin. Induces paw edema in mice. Has a weak vasorelaxant effect on rat aorta. Has anti-inflammatory and anti-nociceptive effects. This chain is Lectin ConGF, found in Canavalia grandiflora (Jackbean).